Consider the following 310-residue polypeptide: Homoserine kinase (310 aa).

91–101 (PIGSGLGSSAC) is a binding site for ATP.

Belongs to the GHMP kinase family. Homoserine kinase subfamily.

Its subcellular location is the cytoplasm. It catalyses the reaction L-homoserine + ATP = O-phospho-L-homoserine + ADP + H(+). The protein operates within amino-acid biosynthesis; L-threonine biosynthesis; L-threonine from L-aspartate: step 4/5. In terms of biological role, catalyzes the ATP-dependent phosphorylation of L-homoserine to L-homoserine phosphate. This Escherichia coli O157:H7 protein is Homoserine kinase.